The following is a 223-amino-acid chain: Endo-1,4-beta-xylanase 2 (223 aa).

A signal peptide spans 1–19; it reads MVSFTSLLAGVAAISGVLA. Positions 20 to 33 are excised as a propeptide; sequence APAAEVESVAVEKR. Gln34 bears the Pyrrolidone carboxylic acid mark. In terms of domain architecture, GH11 spans 34–222; sequence QTIQPGTGYN…FSSGSASITV (189 aa). N-linked (GlcNAc...) asparagine glycans are attached at residues Asn71 and Asn94. The substrate site is built by Tyr106 and Tyr110. Glu119 serves as the catalytic Nucleophile. Residues Tyr121, Arg155, Pro159, Gln169, and Tyr204 each contribute to the substrate site. Glu210 serves as the catalytic Proton donor.

Belongs to the glycosyl hydrolase 11 (cellulase G) family.

The protein localises to the secreted. It carries out the reaction Endohydrolysis of (1-&gt;4)-beta-D-xylosidic linkages in xylans.. The protein operates within glycan degradation; xylan degradation. Glycoside hydrolase involved in the hydrolysis of xylan, a major plant cell wall hemicellulose made up of 1,4-beta-linked D-xylopyranose residues. Catalyzes the endohydrolysis of the main-chain 1,4-beta-glycosidic bonds connecting the xylose subunits yielding various xylooligosaccharides and xylose. The catalysis proceeds by a double-displacement reaction mechanism with a putative covalent glycosyl-enzyme intermediate, with retention of the anomeric configuration. Produces xylobiose and xylose as the main degradation products. This chain is Endo-1,4-beta-xylanase 2, found in Hypocrea jecorina (strain ATCC 56765 / BCRC 32924 / NRRL 11460 / Rut C-30) (Trichoderma reesei).